The sequence spans 421 residues: Isocitrate dehydrogenase [NADP], mitochondrial (421 aa).

Residues 1-8 constitute a mitochondrion transit peptide; that stretch reads ARAAARHY. An N6-acetyllysine mark is found at K14, K17, K36, and K38. K49 and K75 each carry N6-acetyllysine; alternate. N6-succinyllysine; alternate is present on residues K49 and K75. NADP(+)-binding positions include 84–86 and R91; that span reads TIT. D-threo-isocitrate is bound at residue T86. D-threo-isocitrate contacts are provided by residues 103 to 109 and R118; that span reads SPNGTIR. K124 is modified (N6-acetyllysine). At K135 the chain carries N6-acetyllysine; alternate. N6-succinyllysine; alternate is present on K135. Residue R141 participates in D-threo-isocitrate binding. K149 and K162 each carry N6-acetyllysine; alternate. N6-succinyllysine; alternate occurs at positions 149 and 162. At K168 the chain carries N6-acetyllysine. K225 is subject to N6-acetyllysine; alternate. N6-succinyllysine; alternate is present on K225. N6-acetyllysine occurs at positions 232, 241, 244, and 249. The residue at position 251 (K251) is an N6-acetyllysine; alternate. At K251 the chain carries N6-succinyllysine; alternate. Mn(2+) is bound at residue D260. Residue K268 participates in NADP(+) binding. D283 is a Mn(2+) binding site. NADP(+) is bound by residues 318 to 323 and N336; that span reads GTVTRH. K353 carries the N6-acetyllysine; alternate modification. At K353 the chain carries N6-succinyllysine; alternate. K369, K382, and K411 each carry N6-acetyllysine.

It belongs to the isocitrate and isopropylmalate dehydrogenases family. As to quaternary structure, homodimer. Mg(2+) is required as a cofactor. Requires Mn(2+) as cofactor. Acetylation at Lys-382 dramatically reduces catalytic activity. Deacetylated by SIRT3.

The protein resides in the mitochondrion. It carries out the reaction D-threo-isocitrate + NADP(+) = 2-oxoglutarate + CO2 + NADPH. Its function is as follows. Plays a role in intermediary metabolism and energy production. It may tightly associate or interact with the pyruvate dehydrogenase complex. The protein is Isocitrate dehydrogenase [NADP], mitochondrial (IDH2) of Sus scrofa (Pig).